The primary structure comprises 749 residues: Protein lin-54 homolog (749 aa).

A Glycyl lysine isopeptide (Lys-Gly) (interchain with G-Cter in SUMO2) cross-link involves residue K139. N6-acetyllysine is present on residues K244 and K249. Residues S264, S282, S310, and S314 each carry the phosphoserine modification. K357 is covalently cross-linked (Glycyl lysine isopeptide (Lys-Gly) (interchain with G-Cter in SUMO2)). The interval 369–388 is disordered; that stretch reads ASSSTQPVSQNPSTNTQPLQ. The CRC domain occupies 521–634; the sequence is PRKPCNCTKS…KCIGCKNFEE (114 aa). The tract at residues 523–536 is DNA-binding; sequence KPCNCTKSLCLKLY. The Zn(2+) site is built by C525, C527, C532, C537, C539, C546, C549, C551, and C554. Positions 583–596 are linker; it reads IGKGKEGESDRRHS. Residues C599, C601, C606, C611, C613, C620, C624, C626, and C629 each contribute to the Zn(2+) site. The tract at residues 599 to 612 is DNA-binding; sequence CNCKRSGCLKNYCE. The residue at position 635 (S635) is a Phosphoserine. Residues K639, K659, and K661 each participate in a glycyl lysine isopeptide (Lys-Gly) (interchain with G-Cter in SUMO2) cross-link.

Belongs to the lin-54 family. Component of the DREAM complex (also named LINC complex) at least composed of E2F4, E2F5, LIN9, LIN37, LIN52, LIN54, MYBL1, MYBL2, RBL1, RBL2, RBBP4, TFDP1 and TFDP2. The complex exists in quiescent cells where it represses cell cycle-dependent genes. It dissociates in S phase when LIN9, LIN37, LIN52 and LIN54 form a subcomplex that binds to MYBL2.

The protein resides in the nucleus. In terms of biological role, component of the DREAM complex, a multiprotein complex that can both act as a transcription activator or repressor depending on the context. In G0 phase, the complex binds to more than 800 promoters and is required for repression of E2F target genes. In S phase, the complex selectively binds to the promoters of G2/M genes whose products are required for mitosis and participates in their cell cycle dependent activation. In the complex, acts as a DNA-binding protein that binds the promoter of CDK1 in a sequence-specific manner. Specifically recognizes the consensus motif 5'-TTYRAA-3' in target DNA. The protein is Protein lin-54 homolog (LIN54) of Homo sapiens (Human).